Here is a 349-residue protein sequence, read N- to C-terminus: Protein Wnt-7b (349 aa).

The N-terminal stretch at 1–24 (MHRNFRKWIFYVFLCFGVLYVKLG) is a signal peptide. Intrachain disulfides connect C73–C84, C123–C131, C133–C152, C200–C214, and C202–C209. N83 and N127 each carry an N-linked (GlcNAc...) asparagine glycan. S206 is lipidated: O-palmitoleoyl serine; by PORCN. Residues 238–266 (VEVVRASRLRQPTFLRIKQLRSYQKPMET) are disordered linker. Cystine bridges form between C278/C309, C294/C304, C308/C348, C324/C339, C326/C336, and C331/C332. N295 carries an N-linked (GlcNAc...) asparagine glycan.

This sequence belongs to the Wnt family. In terms of assembly, forms a soluble 1:1 complex with AFM; this prevents oligomerization and is required for prolonged biological activity. The complex with AFM may represent the physiological form in body fluids. Interacts with FZD1 and FZD10. Interacts with FZD4 (in vitro). Interacts with PORCN. Interacts with glypican GPC3. Interacts (via intrinsically disordered linker region) with RECK; interaction with RECK confers ligand selectivity for Wnt7 in brain endothelial cells and allows these cells to selectively respond to Wnt7. Palmitoleoylation is required for efficient binding to frizzled receptors. Depalmitoleoylation leads to Wnt signaling pathway inhibition. As to expression, moderately expressed in fetal brain, weakly expressed in fetal lung and kidney, and faintly expressed in adult brain, lung and prostate.

The protein localises to the secreted. The protein resides in the extracellular space. It is found in the extracellular matrix. Ligand for members of the frizzled family of seven transmembrane receptors that functions in the canonical Wnt/beta-catenin signaling pathway. Required for normal fusion of the chorion and the allantois during placenta development. Required for central nervous system (CNS) angiogenesis and blood-brain barrier regulation. The polypeptide is Protein Wnt-7b (WNT7B) (Homo sapiens (Human)).